The chain runs to 116 residues: UPF0329 protein ECU05_1650 (116 aa).

The protein belongs to the UPF0329 family.

This is UPF0329 protein ECU05_1650 from Encephalitozoon cuniculi (strain GB-M1) (Microsporidian parasite).